Consider the following 195-residue polypeptide: Imidazoleglycerol-phosphate dehydratase (195 aa).

This sequence belongs to the imidazoleglycerol-phosphate dehydratase family.

It is found in the cytoplasm. The catalysed reaction is D-erythro-1-(imidazol-4-yl)glycerol 3-phosphate = 3-(imidazol-4-yl)-2-oxopropyl phosphate + H2O. It functions in the pathway amino-acid biosynthesis; L-histidine biosynthesis; L-histidine from 5-phospho-alpha-D-ribose 1-diphosphate: step 6/9. The protein is Imidazoleglycerol-phosphate dehydratase of Dechloromonas aromatica (strain RCB).